We begin with the raw amino-acid sequence, 1124 residues long: Angiopoietin-1 receptor (1124 aa).

Positions 1-22 are cleaved as a signal peptide; the sequence is MDSLASLVLCGVSLLLSGTVEG. Residues 23–748 are Extracellular-facing; the sequence is AMDLILINSL…ADLGGGKMLL (726 aa). A disulfide bridge connects residues Cys44 and Cys102. An Ig-like C2-type 1 domain is found at 44–123; that stretch reads CIASGWRPHE…RTMKMRQQAS (80 aa). N-linked (GlcNAc...) asparagine glycosylation is found at Asn140 and Asn158. EGF-like domains follow at residues 210 to 252, 254 to 299, and 301 to 341; these read RCEA…RTCE, ACEL…LQCN, and ACHP…LQCE. Disulfide bonds link Cys211/Cys220, Cys224/Cys233, Cys227/Cys240, Cys242/Cys251, Cys255/Cys264, Cys268/Cys274, Cys280/Cys287, Cys289/Cys298, Cys302/Cys311, Cys315/Cys323, Cys317/Cys329, Cys331/Cys340, and Cys370/Cys424. Residues 350–440 form the Ig-like C2-type 2 domain; the sequence is PKIVDLPDHI…GMVEKPFNIS (91 aa). N-linked (GlcNAc...) asparagine glycans are attached at residues Asn399, Asn438, Asn464, Asn560, Asn596, Asn649, and Asn691. Fibronectin type-III domains lie at 447-541, 545-636, and 641-735; these read PLNA…TASI, PPRG…TLSD, and QPEN…LPES. A helical transmembrane segment spans residues 749–769; it reads IAILGSAGMTCLTVLLAFLII. The Cytoplasmic segment spans residues 770 to 1124; that stretch reads LQLKRANVQR…GIDCSAEEAA (355 aa). The region spanning 824–1096 is the Protein kinase domain; the sequence is IKFQDVIGEG…QILVSLNRML (273 aa). ATP is bound by residues 830 to 838 and Lys855; that span reads IGEGNFGQV. Position 860 is a phosphotyrosine; by autocatalysis (Tyr860). Asp964 serves as the catalytic Proton acceptor. Phosphotyrosine; by autocatalysis occurs at positions 992, 1102, and 1108.

It belongs to the protein kinase superfamily. Tyr protein kinase family. Tie subfamily. As to quaternary structure, homodimer. Heterodimer with TIE1. Interacts with ANGPT1, ANGPT2 and ANGPT4. At cell-cell contacts in quiescent cells, forms a signaling complex composed of ANGPT1 plus TEK molecules from two adjoining cells. In the absence of endothelial cell-cell contacts, interaction with ANGPT1 mediates contacts with the extracellular matrix. Interacts with PTPRB; this promotes endothelial cell-cell adhesion. Interacts with DOK2, GRB2, GRB7, GRB14, PIK3R1 and PTPN11/SHP2. Colocalizes with DOK2 at contacts with the extracellular matrix in migrating cells. Interacts (tyrosine phosphorylated) with TNIP2. Interacts (tyrosine phosphorylated) with SHC1 (via SH2 domain). Proteolytic processing leads to the shedding of the extracellular domain (soluble TIE-2 alias sTIE-2). In terms of processing, autophosphorylated on tyrosine residues in response to ligand binding. Autophosphorylation occurs in trans, i.e. one subunit of the dimeric receptor phosphorylates tyrosine residues on the other subunit. Autophosphorylation occurs in a sequential manner, where Tyr-992 in the kinase activation loop is phosphorylated first, followed by autophosphorylation at Tyr-1108 and at additional tyrosine residues. ANGPT1-induced phosphorylation is impaired during hypoxia, due to increased expression of ANGPT2. Phosphorylation is important for interaction with GRB14, PIK3R1 and PTPN11. Phosphorylation at Tyr-1102 is important for interaction with SHC1, GRB2 and GRB7. Phosphorylation at Tyr-1108 is important for interaction with DOK2 and for coupling to downstream signal transduction pathways in endothelial cells. Dephosphorylated by PTPRB. Post-translationally, ubiquitinated. The phosphorylated receptor is ubiquitinated and internalized, leading to its degradation. As to expression, detected in umbilical vein endothelial cells. Proteolytic processing gives rise to a soluble extracellular domain that is detected in blood plasma (at protein level). Predominantly expressed in endothelial cells and their progenitors, the angioblasts. Has been directly found in placenta and lung, with a lower level in umbilical vein endothelial cells, brain and kidney.

The protein localises to the cell membrane. The protein resides in the cell junction. Its subcellular location is the focal adhesion. It is found in the cytoplasm. It localises to the cytoskeleton. The protein localises to the secreted. It carries out the reaction L-tyrosyl-[protein] + ATP = O-phospho-L-tyrosyl-[protein] + ADP + H(+). Angiopoietin binding leads to receptor dimerization and activation by autophosphorylation at Tyr-992 on the kinase activation loop. Inhibited by staurosporine, K252a, PP2, damnacanthal, SB203580, CEP-11207, CEP-11981 and CE-245677. Inhibited by triazine, thienopyrimidine and thiazolopyrimidine derivatives. In terms of biological role, tyrosine-protein kinase that acts as a cell-surface receptor for ANGPT1, ANGPT2 and ANGPT4 and regulates angiogenesis, endothelial cell survival, proliferation, migration, adhesion and cell spreading, reorganization of the actin cytoskeleton, but also maintenance of vascular quiescence. Has anti-inflammatory effects by preventing the leakage of pro-inflammatory plasma proteins and leukocytes from blood vessels. Required for normal angiogenesis and heart development during embryogenesis. Required for post-natal hematopoiesis. After birth, activates or inhibits angiogenesis, depending on the context. Inhibits angiogenesis and promotes vascular stability in quiescent vessels, where endothelial cells have tight contacts. In quiescent vessels, ANGPT1 oligomers recruit TEK to cell-cell contacts, forming complexes with TEK molecules from adjoining cells, and this leads to preferential activation of phosphatidylinositol 3-kinase and the AKT1 signaling cascades. In migrating endothelial cells that lack cell-cell adhesions, ANGT1 recruits TEK to contacts with the extracellular matrix, leading to the formation of focal adhesion complexes, activation of PTK2/FAK and of the downstream kinases MAPK1/ERK2 and MAPK3/ERK1, and ultimately to the stimulation of sprouting angiogenesis. ANGPT1 signaling triggers receptor dimerization and autophosphorylation at specific tyrosine residues that then serve as binding sites for scaffold proteins and effectors. Signaling is modulated by ANGPT2 that has lower affinity for TEK, can promote TEK autophosphorylation in the absence of ANGPT1, but inhibits ANGPT1-mediated signaling by competing for the same binding site. Signaling is also modulated by formation of heterodimers with TIE1, and by proteolytic processing that gives rise to a soluble TEK extracellular domain. The soluble extracellular domain modulates signaling by functioning as decoy receptor for angiopoietins. TEK phosphorylates DOK2, GRB7, GRB14, PIK3R1; SHC1 and TIE1. The protein is Angiopoietin-1 receptor of Homo sapiens (Human).